A 337-amino-acid chain; its full sequence is MTDHALLLVNLGSPASTSVADVRRYLNQFLMDPYVVDLPWPVRRLLVSLILIKRPEQSAHAYASIWWDEGSPLVVLTRRLQAAMVEHWPHGPVEIAMRYGEPALPQVLERLAAQGVRKVTLAPLYPQFADSTVTTVVALANQTVAERALPLQLRVLQPFYDHPEYIDALVASARPYLEQDYDHLLLSFHGLPERHLKKLMPGSKHDLRAADCCKDASAEVRAVCYRGQCLASAKAFATRMGIPDGKWSVSFQSRLGRDKWIEPYTETRLDELAKAGAKKLLVMCPAFVADCIETLEEIGDRGKEQFIEAGGEELVLVPCLNDHPEWVRVLARMCEKA.

Fe cation-binding residues include His-189 and Glu-293.

Belongs to the ferrochelatase family.

It localises to the cytoplasm. The enzyme catalyses heme b + 2 H(+) = protoporphyrin IX + Fe(2+). It functions in the pathway porphyrin-containing compound metabolism; protoheme biosynthesis; protoheme from protoporphyrin-IX: step 1/1. In terms of biological role, catalyzes the ferrous insertion into protoporphyrin IX. In Pseudomonas putida (strain W619), this protein is Ferrochelatase.